The following is an 844-amino-acid chain: Eukaryotic translation elongation factor 2 (844 aa).

The 332-residue stretch at 17 to 348 folds into the tr-type G domain; that stretch reads RNIRNMSVIA…MIAIHLPSPV (332 aa). Residue 26 to 33 participates in GTP binding; the sequence is AHVDHGKS. Phosphothreonine is present on residues T57 and T59. GTP is bound by residues 162–165 and 219–221; these read NKMD and SGL. The residue at position 701 (H701) is a Diphthamide.

It belongs to the TRAFAC class translation factor GTPase superfamily. Classic translation factor GTPase family. EF-G/EF-2 subfamily. Post-translationally, phosphorylation by EF-2 kinase completely inactivates eEF2.

It localises to the cytoplasm. It carries out the reaction GTP + H2O = GDP + phosphate + H(+). Its function is as follows. Catalyzes the GTP-dependent ribosomal translocation step during translation elongation. During this step, the ribosome changes from the pre-translocational (PRE) to the post-translocational (POST) state as the newly formed A-site-bound peptidyl-tRNA and P-site-bound deacylated tRNA move to the P and E sites, respectively. Catalyzes the coordinated movement of the two tRNA molecules, the mRNA and conformational changes in the ribosome. In Drosophila melanogaster (Fruit fly), this protein is Eukaryotic translation elongation factor 2.